A 1349-amino-acid chain; its full sequence is ABC multidrug transporter mdr1 (1349 aa).

A disordered region spans residues 1-62; the sequence is MPAPETGASS…PDGKQKDHGK (62 aa). The span at 35–45 shows a compositional bias: basic and acidic residues; the sequence is DNEKPHDHHSL. 4 helical membrane-spanning segments follow: residues 108–128, 162–182, 234–254, and 257–277; these read ILII…LPLF, YFVY…VGFI, KVGL…VAYV, and WKLA…MGGG. In terms of domain architecture, ABC transmembrane type-1 1 spans 112–402; that stretch reads LVSAICAIAA…VAPNGQAFTN (291 aa). N308 carries N-linked (GlcNAc...) asparagine glycosylation. 2 consecutive transmembrane segments (helical) span residues 339–359 and 371–391; these read ILGM…GLGF and VNVG…FSLG. The region spanning 437–682 is the ABC transporter 1 domain; sequence IEFRNVKHIY…KGTYYKLVEA (246 aa). 472 to 479 contributes to the ATP binding site; it reads GPSGSGKS. The next 2 membrane-spanning stretches (helical) occupy residues 779 to 799 and 828 to 848; these read MLIG…QAFL and FFVV…AFAI. Residues 780–1069 form the ABC transmembrane type-1 2 domain; that stretch reads LIGLTFSFLA…VFSFAPDMGK (290 aa). N878 and N893 each carry an N-linked (GlcNAc...) asparagine glycan. 4 helical membrane passes run 896-916, 926-948, 1016-1036, and 1043-1063; these read GVSG…GAAM, LALV…FYML, ALVF…LGHH, and FFVC…VFSF. An ABC transporter 2 domain is found at 1104–1342; that stretch reads IEFRDVHFRY…KGRYYELVNL (239 aa). Residue N1126 is glycosylated (N-linked (GlcNAc...) asparagine). 1139 to 1146 is a binding site for ATP; the sequence is GPSGCGKS.

Belongs to the ABC transporter superfamily. ABCB family. Multidrug resistance exporter (TC 3.A.1.201) subfamily.

The protein resides in the cell membrane. The enzyme catalyses voriconazole(in) + ATP + H2O = voriconazole(out) + ADP + phosphate + H(+). Pleiotropic ABC efflux transporter that may be involved in A.fumigatus adaptation to azoles such as vorizonazole. This Aspergillus fumigatus (strain ATCC MYA-4609 / CBS 101355 / FGSC A1100 / Af293) (Neosartorya fumigata) protein is ABC multidrug transporter mdr1.